The following is a 160-amino-acid chain: Phosphopantetheine adenylyltransferase (160 aa).

Position 10 (Thr10) interacts with substrate. Residues Thr10–Phe11 and His18 contribute to the ATP site. Lys42, Met74, and Arg88 together coordinate substrate. ATP is bound by residues Gly89–Arg91, Glu99, and Leu124–Ser130.

This sequence belongs to the bacterial CoaD family. In terms of assembly, homohexamer. It depends on Mg(2+) as a cofactor.

The protein localises to the cytoplasm. It carries out the reaction (R)-4'-phosphopantetheine + ATP + H(+) = 3'-dephospho-CoA + diphosphate. The protein operates within cofactor biosynthesis; coenzyme A biosynthesis; CoA from (R)-pantothenate: step 4/5. Its function is as follows. Reversibly transfers an adenylyl group from ATP to 4'-phosphopantetheine, yielding dephospho-CoA (dPCoA) and pyrophosphate. The polypeptide is Phosphopantetheine adenylyltransferase (Photorhabdus laumondii subsp. laumondii (strain DSM 15139 / CIP 105565 / TT01) (Photorhabdus luminescens subsp. laumondii)).